A 100-amino-acid polypeptide reads, in one-letter code: Urease subunit gamma (100 aa).

The protein belongs to the urease gamma subunit family. In terms of assembly, heterotrimer of UreA (gamma), UreB (beta) and UreC (alpha) subunits. Three heterotrimers associate to form the active enzyme.

Its subcellular location is the cytoplasm. It catalyses the reaction urea + 2 H2O + H(+) = hydrogencarbonate + 2 NH4(+). Its pathway is nitrogen metabolism; urea degradation; CO(2) and NH(3) from urea (urease route): step 1/1. Functionally, expression of the urease operon increases the likelihood of bacterial survival by contributing to acid resistance in vitro and in vivo in BALB/c mice. Y.enterocolitica enters the body via an oral path and must survive the acidic stomach before being able to colonize the intestinal mucosa. This Yersinia enterocolitica protein is Urease subunit gamma.